The following is a 1891-amino-acid chain: TATA-binding protein-associated factor mot1 (1891 aa).

The HEAT 1 repeat unit spans residues 30–68 (PDELFNLLGRILPYLRSKSWDTRAAAAKAIGLIVANADT). 3 disordered regions span residues 184–216 (FVASREHSIQGTSQPLASPIEPANGEESGLSKR), 241–283 (LSSR…LDRS), and 295–316 (FKGASVPENPLLQPESTEEGPN). Residues 264–275 (ENGEERNGDSKP) show a composition bias toward basic and acidic residues. HEAT repeat units follow at residues 473-511 (SKLMDGVLEAVMKGLGDYDDDVRAVSAATLVPIAEEFVK) and 569-606 (SSFGKLVPRLYPFLRHTITSVRSAVLRALMTFLQLEGE). Low complexity predominate over residues 699–710 (SAAAPARSSPAS). Residues 699–740 (SAAAPARSSPASNTPEGTKGRRRKSEKKEAPPPSAHNVDGHM) form a disordered region. 4 HEAT repeats span residues 957 to 996 (PKKPSHIIKGMMDSIKKEENAELQQRSATAITSLVEYYTT), 1139 to 1177 (YPWVVDLLPLVVKALQCNLSVIRYAAAKCFATICSVITV), 1181 to 1216 (TMLVEKVLPMINDALDVHHRQGAVECIYHLIHVMED), and 1219 to 1257 (LPYVIFLVVPVLGRMSDSDNEVRLLATTSFATLVKLVPL). The Helicase ATP-binding domain maps to 1316–1489 (AFLNRYNLHG…WSLFDFLMPG (174 aa)). ATP is bound at residue 1329–1336 (DDMGLGKT). The DEAH box motif lies at 1440-1443 (DEGH). Residues 1526–1565 (EALHKQVLPFLLRRLKEEVLNDLPPKIIQNYYCDPSELQR) form an HEAT 8 repeat. The region spanning 1663–1813 (DLSGASYVSP…STVVNQQNAG (151 aa)) is the Helicase C-terminal domain.

This sequence belongs to the SNF2/RAD54 helicase family. In terms of assembly, forms the NCT transcriptional regulatory complex with nctA and nctB.

The protein resides in the nucleus. Its function is as follows. Regulates transcription in association with TATA binding protein (TBP). Removes TBP from the TATA box via its C-terminal ATPase activity. Both transcription activation and repression require its ATPase activity. Part of the NCT transcriptional regulatory complex that acts as a key regulator of ergosterol biosynthesis and the azole exporter cdr1B. The NCT complex binds the promoters of genes linked to azole susceptibility, and especially represses the expression of cdr1B transporter. The chain is TATA-binding protein-associated factor mot1 from Aspergillus fumigatus (strain ATCC MYA-4609 / CBS 101355 / FGSC A1100 / Af293) (Neosartorya fumigata).